The following is a 208-amino-acid chain: Large ribosomal subunit protein bL17 (208 aa).

The interval 122–208 is disordered; it reads TEKKKKKPAK…ASEEAPPKTE (87 aa). Positions 151 to 179 are enriched in low complexity; the sequence is ADTPAPAAEESAPAKAAEPEAEAAAPEAE.

This sequence belongs to the bacterial ribosomal protein bL17 family. In terms of assembly, part of the 50S ribosomal subunit. Contacts protein L32.

This chain is Large ribosomal subunit protein bL17, found in Desulfosudis oleivorans (strain DSM 6200 / JCM 39069 / Hxd3) (Desulfococcus oleovorans).